The chain runs to 221 residues: Oxaloacetate tautomerase FAHD1, mitochondrial (221 aa).

A mitochondrion-targeting transit peptide spans 1 to 24; the sequence is MAASRPLSRFWEWGKNIVCVGRNY. Phosphoserine is present on S37. Mg(2+) contacts are provided by E68, E70, and D99. At K110 the chain carries N6-acetyllysine. At K112 the chain carries N6-succinyllysine.

It belongs to the FAH family. In terms of assembly, homodimer. The cofactor is Mg(2+). Requires Mn(2+) as cofactor.

It is found in the mitochondrion. The protein resides in the cytoplasm. It localises to the cytosol. It carries out the reaction oxaloacetate = enol-oxaloacetate. The catalysed reaction is oxaloacetate + H(+) = pyruvate + CO2. The enzyme catalyses a 3-acylpyruvate + H2O = a carboxylate + pyruvate + H(+). It catalyses the reaction acetylpyruvate + H2O = acetate + pyruvate + H(+). It carries out the reaction 3-fumarylpyruvate + H2O = fumarate + pyruvate + H(+). Its activity is regulated as follows. Oxaloacetate decarboxylation is competitively inhibited by oxalate. Its function is as follows. Tautomerase that converts enol-oxaloacetate, a strong inhibitor of succinate dehydrogenase, to the physiological keto form of oxaloacetate. It is thereby required to maximize aerobic respiration efficiency by preventing succinate dehydrogenase inhibition. Also acts as a weak oxaloacetate decarboxylase (ODx), catalyzing the decarboxylation of oxaloacetate (OAA) to pyruvate and CO(2), and as such is likely a regulatory enzyme in the TCA cycle. Also displays acylpyruvase activity, being able to hydrolyze acetylpyruvate and fumarylpyruvate in vitro. The sequence is that of Oxaloacetate tautomerase FAHD1, mitochondrial from Bos taurus (Bovine).